A 677-amino-acid chain; its full sequence is WD and tetratricopeptide repeats protein 1 (677 aa).

WD repeat units follow at residues 45-84 (GHSGCVNCLEWNEKGDLLASGSDDQHTIVWDPLHHKKLLS), 88-129 (GHTA…TIHM), 132-172 (DHTN…KHSE), 182-222 (GPMV…NHRK), and 265-305 (RLRV…RPYT). A Phosphoserine modification is found at serine 352. TPR repeat units follow at residues 361–394 (LERVKQQANEAFACQQWTQAIQLYSQAVQKAPHN) and 396–431 (MLYGNRAAAYMKRKWDGDHYDALRDCLKAISLNPCH). The tract at residues 489–509 (EEKKAAGGGGGPVRLRSTSRK) is disordered. Serine 511 carries the post-translational modification Phosphoserine. 2 WD repeats span residues 535-575 (NTTT…LVRV) and 578-617 (GDESIVNCLQPHPSYCFLATSGIDPVVRLWNPRPESEDLT). Residues 655–677 (SSGGAGASDDEDSAEGQVQCRPS) form a disordered region.

Its pathway is protein modification; protein ubiquitination. In terms of biological role, may function as a substrate receptor for CUL4-DDB1 E3 ubiquitin-protein ligase complex. This chain is WD and tetratricopeptide repeats protein 1 (Wdtc1), found in Mus musculus (Mouse).